Here is a 165-residue protein sequence, read N- to C-terminus: 6,7-dimethyl-8-ribityllumazine synthase (165 aa).

Residues Phe22, Ser56 to Glu58, and Ala80 to Ile82 contribute to the 5-amino-6-(D-ribitylamino)uracil site. Residue Glu85–Thr86 coordinates (2S)-2-hydroxy-3-oxobutyl phosphate. His88 functions as the Proton donor in the catalytic mechanism. Phe113 serves as a coordination point for 5-amino-6-(D-ribitylamino)uracil. Arg127 lines the (2S)-2-hydroxy-3-oxobutyl phosphate pocket.

The protein belongs to the DMRL synthase family.

The enzyme catalyses (2S)-2-hydroxy-3-oxobutyl phosphate + 5-amino-6-(D-ribitylamino)uracil = 6,7-dimethyl-8-(1-D-ribityl)lumazine + phosphate + 2 H2O + H(+). The protein operates within cofactor biosynthesis; riboflavin biosynthesis; riboflavin from 2-hydroxy-3-oxobutyl phosphate and 5-amino-6-(D-ribitylamino)uracil: step 1/2. In terms of biological role, catalyzes the formation of 6,7-dimethyl-8-ribityllumazine by condensation of 5-amino-6-(D-ribitylamino)uracil with 3,4-dihydroxy-2-butanone 4-phosphate. This is the penultimate step in the biosynthesis of riboflavin. The protein is 6,7-dimethyl-8-ribityllumazine synthase of Thermotoga petrophila (strain ATCC BAA-488 / DSM 13995 / JCM 10881 / RKU-1).